Here is an 84-residue protein sequence, read N- to C-terminus: UPF0386 protein Oant_1614 (84 aa).

Belongs to the UPF0386 family.

The protein is UPF0386 protein Oant_1614 of Brucella anthropi (strain ATCC 49188 / DSM 6882 / CCUG 24695 / JCM 21032 / LMG 3331 / NBRC 15819 / NCTC 12168 / Alc 37) (Ochrobactrum anthropi).